The primary structure comprises 90 residues: uncharacterized protein (90 aa).

Residues 13–34 (APEGMGPHHAASSSHHSAQHHH) form a disordered region. A helical membrane pass occupies residues 52 to 72 (YKMWFLYALILALIFGVFMWW).

It is found in the host membrane. This is an uncharacterized protein from Invertebrate iridescent virus 3 (IIV-3).